Consider the following 322-residue polypeptide: 3-alpha-hydroxysteroid dehydrogenase (322 aa).

M1 is subject to Blocked amino end (Met). Residues 20 to 24 (GFGTT) and D50 each bind NADP(+). Y55 serves as the catalytic Proton donor. Substrate is bound at residue H117. Residues 166 to 167 (SN), Q190, and 216 to 221 (YCTLGS) each bind NADP(+). Residue W227 participates in substrate binding. 270-280 (RSFNAKRIKEL) provides a ligand contact to NADP(+).

It belongs to the aldo/keto reductase family. Monomer. In terms of tissue distribution, in brain, highest levels found in olfactory bulb. Moderate levels present in cerebellum, cerebral cortex, hypothalamus and pituitary. Low levels present in amygdala, brain stem, caudate putamen, cingulate cortex, hippocampus, midbrain, and thalamus.

The protein localises to the cytoplasm. The catalysed reaction is a 3alpha-hydroxysteroid + NADP(+) = a 3-oxosteroid + NADPH + H(+). It catalyses the reaction a 3alpha-hydroxysteroid + NAD(+) = a 3-oxosteroid + NADH + H(+). With respect to regulation, potently inhibited by the nonsteroidal anti-inflammatory drugs (NSAID). Functionally, besides being a 3-alpha-hydroxysteroid dehydrogenase, the enzyme can accomplish diverse functions: as quinone reductase, as an aromatic alcohol dehydrogenase, as dihydrodiol dehydrogenase, and as 9-, 11-, and 15-hydroxyprostaglandin dehydrogenase. The chain is 3-alpha-hydroxysteroid dehydrogenase (Akr1c9) from Rattus norvegicus (Rat).